Reading from the N-terminus, the 356-residue chain is S-adenosylmethionine:tRNA ribosyltransferase-isomerase (356 aa).

It belongs to the QueA family. As to quaternary structure, monomer.

The protein resides in the cytoplasm. It catalyses the reaction 7-aminomethyl-7-carbaguanosine(34) in tRNA + S-adenosyl-L-methionine = epoxyqueuosine(34) in tRNA + adenine + L-methionine + 2 H(+). Its pathway is tRNA modification; tRNA-queuosine biosynthesis. In terms of biological role, transfers and isomerizes the ribose moiety from AdoMet to the 7-aminomethyl group of 7-deazaguanine (preQ1-tRNA) to give epoxyqueuosine (oQ-tRNA). The protein is S-adenosylmethionine:tRNA ribosyltransferase-isomerase of Shigella boydii serotype 18 (strain CDC 3083-94 / BS512).